Here is a 491-residue protein sequence, read N- to C-terminus: MSNVMVVPGMLSAAAADVASIGAALSAANGAAAPTTAGVLAAGADEVSAAIASLFSGYARDYQALSAQMARFHQQFVQALTASVGSYAAAEAANASPLQALEQQVLAAINAPTQTLLGRPLIGNGADGLPGQNGGAGGLLWGNGGNGGAGDAAHPNGGNGGDAGMFGNGGAGGAGYSPAAGTGAAGGAGGAGGAGGWLSGNGGAGGNGGTGASGADGGGGLPPVPASPGGNGGGGDAGGAAGMFGTGGAGGTGGDGGAGGAGDSPNSGANGARGGDGGNGAAGGAGGRLFGNGGAGGNGGTAGQGGDGGTALGAGGIGGDGGTGGAGGTGGTAGIGGSSAGAGGAGGDGGAGGTGGGSSMIGGKGGTGGNGGVGGTGGASALTIGNGSSAGAGGAGGAGGTGGTGGYIESLDGKGQAGNGGNGGNGAAGGAGGGGTGAGGNGGAGGNGGDGGPSQGGGNPGFGGDGGTGGPGGVGVPDGIGGANGAQGKHG.

The region spanning 1–93 is the PE domain; it reads MSNVMVVPGM…VGSYAAAEAA (93 aa). Composition is skewed to gly residues over residues 207 to 221 and 229 to 238; these read NGGT…GGGL and GGNGGGGDAG. Disordered stretches follow at residues 207–238, 255–275, and 444–491; these read NGGT…GDAG, DGGA…ARGG, and AGGN…GKHG. Gly residues predominate over residues 444–485; the sequence is AGGNGGDGGPSQGGGNPGFGGDGGTGGPGGVGVPDGIGGANG.

Belongs to the mycobacterial PE family. PGRS subfamily.

It is found in the cell surface. The chain is PE-PGRS family protein PE_PGRS26 from Mycobacterium tuberculosis (strain ATCC 25618 / H37Rv).